The sequence spans 110 residues: UPF0132 membrane protein MJ1443 (110 aa).

The next 3 helical transmembrane spans lie at 15-35 (IEGA…YILE), 49-69 (IILF…PYGW), and 70-90 (MLSG…MYKA).

The protein belongs to the UPF0132 family.

Its subcellular location is the cell membrane. This Methanocaldococcus jannaschii (strain ATCC 43067 / DSM 2661 / JAL-1 / JCM 10045 / NBRC 100440) (Methanococcus jannaschii) protein is UPF0132 membrane protein MJ1443.